Consider the following 479-residue polypeptide: uncharacterized protein (479 aa).

ATP-binding positions include 150–158, D360, R375, and K462; that span reads TSGSTGKPK.

This sequence belongs to the ATP-dependent AMP-binding enzyme family.

Functionally, may be involved in fatty acid metabolism. This is an uncharacterized protein from Bacillus subtilis (strain 168).